The following is a 376-amino-acid chain: Chaperone protein DnaJ (376 aa).

One can recognise a J domain in the interval 5-70; the sequence is DYYEVLGVAR…NKRRAYDAHG (66 aa). The CR-type zinc-finger motif lies at 132 to 209; that stretch reads GIERRIEIPT…CHGAGRVEED (78 aa). Cys-145, Cys-148, Cys-161, Cys-164, Cys-183, Cys-186, Cys-197, and Cys-200 together coordinate Zn(2+). CXXCXGXG motif repeat units follow at residues 145-152, 161-168, 183-190, and 197-204; these read CEPCHGSG, CATCHGRG, CPHCDGRG, and CKTCHGAG.

The protein belongs to the DnaJ family. In terms of assembly, homodimer. Zn(2+) is required as a cofactor.

It is found in the cytoplasm. Functionally, participates actively in the response to hyperosmotic and heat shock by preventing the aggregation of stress-denatured proteins and by disaggregating proteins, also in an autonomous, DnaK-independent fashion. Unfolded proteins bind initially to DnaJ; upon interaction with the DnaJ-bound protein, DnaK hydrolyzes its bound ATP, resulting in the formation of a stable complex. GrpE releases ADP from DnaK; ATP binding to DnaK triggers the release of the substrate protein, thus completing the reaction cycle. Several rounds of ATP-dependent interactions between DnaJ, DnaK and GrpE are required for fully efficient folding. Also involved, together with DnaK and GrpE, in the DNA replication of plasmids through activation of initiation proteins. This is Chaperone protein DnaJ from Xanthomonas campestris pv. campestris (strain 8004).